We begin with the raw amino-acid sequence, 1330 residues long: Paired amphipathic helix protein Sin3-like 3 (1330 aa).

PAH domains are found at residues 8-78 (QKLT…LPKG) and 94-164 (KRVE…LPDT). A compositionally biased stretch (basic and acidic residues) spans 191–246 (IITPHPDHDYGTEHIDQDRERPIKKENKEHMRGTNKENEHRDARDFEPHSKKEQFL). The segment at 191–281 (IITPHPDHDY…VPSSSTYDEK (91 aa)) is disordered. Over residues 262–277 (ISNQSKLSGAVPSSST) the composition is skewed to polar residues. Residues 283 to 351 (AMKSYSQDLA…DSFIEFLVQC (69 aa)) enclose the PAH 3 domain. 5 disordered regions span residues 373–401 (GEGK…DRDH), 718–775 (NQNV…GRTS), 789–808 (KNVV…SIER), 882–906 (QEMA…FEED), and 920–1002 (SKAN…EAEC). Over residues 383–401 (DNDRDQEHKRDDGLRDRDH) the composition is skewed to basic and acidic residues. Residues 723–734 (SGSSSAGESEGS) show a composition bias toward low complexity. A compositionally biased stretch (basic and acidic residues) spans 789–800 (KNVVTSDEKPES). Positions 920 to 932 (SKANDSTGNNISG) are enriched in polar residues. 2 stretches are compositionally biased toward basic and acidic residues: residues 933-949 (DRSR…RAEN) and 956-968 (NAAR…RNEY). Over residues 980–989 (GGEDPEDDLD) the composition is skewed to acidic residues. Ser-996 bears the Phosphoserine mark.

Interacts with ERF7 and the histone deacetylase HDA19.

It localises to the nucleus. Its function is as follows. Acts as a transcriptional repressor. Interacts with ERF7 to repress genes in abscisic acid and drought stress responses. The heterodimer represses transcription by tethering SNL3 to DNA. The sequence is that of Paired amphipathic helix protein Sin3-like 3 (SNL3) from Arabidopsis thaliana (Mouse-ear cress).